Here is a 302-residue protein sequence, read N- to C-terminus: Rab effector Noc2 (302 aa).

The region spanning 41 to 158 (QRRSQCLSPG…KRSGAWFYKG (118 aa)) is the RabBD domain. Residues 89 to 146 (GNGLSQCLLCGEVLGFLGSSSVFCKDCRKKVCTKCGIEASPGQKRPLWLCKICSEQRE) form an FYVE-type zinc finger. Positions 95, 98, 112, 115, 120, 123, 138, and 141 each coordinate Zn(2+). Residues 174 to 302 (DPHFRPLPVE…KRHTWATPRY (129 aa)) are disordered. A compositionally biased stretch (polar residues) spans 185-197 (TETQPPSAETSRV). S248 is modified (phosphoserine). Low complexity predominate over residues 258 to 269 (SHLSGSQSSLGS).

In terms of assembly, recruited to dense-core vesicles through specific interaction with RAB27A in endocrine cells. Interacts with RAB3A, RAB3B, RAB3C and RAB3D. Interacts with ZYX. Highly expressed in pancreatic islets. High to moderate expression in adrenal gland, pituitary gland and ovary.

Its subcellular location is the cytoplasm. The protein localises to the cytoplasmic vesicle. The protein resides in the secretory vesicle membrane. In terms of biological role, rab GTPase effector involved in the late steps of regulated exocytosis, both in endocrine and exocrine cells. Regulates the exocytosis of dense-core vesicles in neuroendocrine cells through interaction with RAB27A. Acts as a potential RAB3B effector protein in epithelial cells. In Mus musculus (Mouse), this protein is Rab effector Noc2 (Rph3al).